The primary structure comprises 513 residues: NADH-quinone oxidoreductase chain 13 (513 aa).

The next 14 helical transmembrane spans lie at 3–23, 34–54, 81–101, 112–132, 133–153, 164–184, 211–231, 250–270, 277–297, 312–332, 340–360, 383–403, 418–438, and 463–483; these read NLLS…ALFL, AKWL…FVLF, VDGI…LTIL, EYMI…TALD, LVLF…IIGI, FKFF…MIAM, MTVV…SFAV, PTAG…YGFL, FPVA…IAIV, VIAY…FAAN, IFQM…VGVI, AAVF…SGFV, WVAL…LWLY, and WVFI…RLVT.

Belongs to the complex I subunit 4 family. As to quaternary structure, NDH-1 is composed of at least 14 different subunits, Nqo1 to Nqo14. The complex has a L-shaped structure, with the hydrophobic arm (subunits Nqo7, Nqo8, Nqo10 to Nqo14) embedded in the inner membrane and the hydrophilic peripheral arm (subunits Nqo1 to Nqo6, Nqo9) protruding into the bacterial cytoplasm. The hydrophilic domain contains all the redox centers.

The protein localises to the cell inner membrane. It carries out the reaction a quinone + NADH + 5 H(+)(in) = a quinol + NAD(+) + 4 H(+)(out). NDH-1 shuttles electrons from NADH, via FMN and iron-sulfur (Fe-S) centers, to quinones in the respiratory chain. The immediate electron acceptor for the enzyme in this species is believed to be ubiquinone. Couples the redox reaction to proton translocation (for every two electrons transferred, four hydrogen ions are translocated across the cytoplasmic membrane), and thus conserves the redox energy in a proton gradient. This is NADH-quinone oxidoreductase chain 13 from Paracoccus denitrificans.